A 222-amino-acid polypeptide reads, in one-letter code: Putative RING finger protein ORF118 (222 aa).

The RING-type zinc-finger motif lies at 78–114 (CCICMAKNNRKEALPCQHNVCRDCYYKPMRNNCPVCN). Residues 184–222 (IENRIHNNNNNNYDENNPDDLPVIHPPRRRHRQTAHISI) form a disordered region. Over residues 189–198 (HNNNNNNYDE) the composition is skewed to low complexity. The segment covering 209-222 (PPRRRHRQTAHISI) has biased composition (basic residues).

This is Putative RING finger protein ORF118 from Magallana gigas (Pacific oyster).